The chain runs to 415 residues: L-cysteine:1D-myo-inositol 2-amino-2-deoxy-alpha-D-glucopyranoside ligase (415 aa).

Cysteine 43 serves as a coordination point for Zn(2+). L-cysteinyl-5'-AMP is bound by residues 43–46, threonine 58, and 81–83; these read CGIT and NVT. The short motif at 45–55 is the 'HIGH' region element; it reads ITPYDATHLGH. Positions 187–192 match the 'ERGGDP' region motif; it reads ERGGDP. Residue tryptophan 227 participates in L-cysteinyl-5'-AMP binding. Zn(2+) is bound at residue cysteine 231. 249-251 is an L-cysteinyl-5'-AMP binding site; it reads GSD. A Zn(2+)-binding site is contributed by histidine 256. Isoleucine 283 serves as a coordination point for L-cysteinyl-5'-AMP. A 'KMSKS' region motif is present at residues 289-293; it reads KMSKS.

It belongs to the class-I aminoacyl-tRNA synthetase family. MshC subfamily. As to quaternary structure, monomer. It depends on Zn(2+) as a cofactor.

It carries out the reaction 1D-myo-inositol 2-amino-2-deoxy-alpha-D-glucopyranoside + L-cysteine + ATP = 1D-myo-inositol 2-(L-cysteinylamino)-2-deoxy-alpha-D-glucopyranoside + AMP + diphosphate + H(+). In terms of biological role, catalyzes the ATP-dependent condensation of GlcN-Ins and L-cysteine to form L-Cys-GlcN-Ins. This chain is L-cysteine:1D-myo-inositol 2-amino-2-deoxy-alpha-D-glucopyranoside ligase, found in Saccharomonospora viridis (strain ATCC 15386 / DSM 43017 / JCM 3036 / CCUG 5913 / NBRC 12207 / NCIMB 9602 / P101) (Thermoactinomyces viridis).